The primary structure comprises 197 residues: MLERIRDSFTESIQTKIDAAEALPESIEKAAEMMVQCLLGGNKILSCGNGGSAGDAQHFSAELLNRYEIERPPLPAIALSCDTSTITAIANDYSYDEIFSKQIFALGQPGDILLAISTSGNSGNIIKAMEAALSRDMTIVALTGKDGGAMAGLMSAGDVEIRVPSNVTARIQEVHLLVIHCLCDNIDRTLFPQDEQA.

One can recognise an SIS domain in the interval 34-196; that stretch reads MVQCLLGGNK…DRTLFPQDEQ (163 aa). 49 to 51 is a binding site for substrate; the sequence is NGG. The Zn(2+) site is built by His-58 and Glu-62. Residues Glu-62, 91-92, 117-119, Ser-122, and Gln-172 contribute to the substrate site; these read ND and STS. Zn(2+) contacts are provided by Gln-172 and His-180.

It belongs to the SIS family. GmhA subfamily. In terms of assembly, homotetramer. Zn(2+) serves as cofactor.

The protein localises to the cytoplasm. The catalysed reaction is 2 D-sedoheptulose 7-phosphate = D-glycero-alpha-D-manno-heptose 7-phosphate + D-glycero-beta-D-manno-heptose 7-phosphate. Its pathway is carbohydrate biosynthesis; D-glycero-D-manno-heptose 7-phosphate biosynthesis; D-glycero-alpha-D-manno-heptose 7-phosphate and D-glycero-beta-D-manno-heptose 7-phosphate from sedoheptulose 7-phosphate: step 1/1. Functionally, catalyzes the isomerization of sedoheptulose 7-phosphate in D-glycero-D-manno-heptose 7-phosphate. The chain is Phosphoheptose isomerase from Shewanella frigidimarina (strain NCIMB 400).